Reading from the N-terminus, the 408-residue chain is Arginine biosynthesis bifunctional protein ArgJ (408 aa).

Thr-156, Lys-182, Thr-193, Glu-279, Asn-403, and Ser-408 together coordinate substrate. Thr-193 (nucleophile) is an active-site residue.

Belongs to the ArgJ family. As to quaternary structure, heterotetramer of two alpha and two beta chains.

It localises to the cytoplasm. The enzyme catalyses N(2)-acetyl-L-ornithine + L-glutamate = N-acetyl-L-glutamate + L-ornithine. It carries out the reaction L-glutamate + acetyl-CoA = N-acetyl-L-glutamate + CoA + H(+). It participates in amino-acid biosynthesis; L-arginine biosynthesis; L-ornithine and N-acetyl-L-glutamate from L-glutamate and N(2)-acetyl-L-ornithine (cyclic): step 1/1. The protein operates within amino-acid biosynthesis; L-arginine biosynthesis; N(2)-acetyl-L-ornithine from L-glutamate: step 1/4. In terms of biological role, catalyzes two activities which are involved in the cyclic version of arginine biosynthesis: the synthesis of N-acetylglutamate from glutamate and acetyl-CoA as the acetyl donor, and of ornithine by transacetylation between N(2)-acetylornithine and glutamate. The sequence is that of Arginine biosynthesis bifunctional protein ArgJ from Bordetella pertussis (strain Tohama I / ATCC BAA-589 / NCTC 13251).